A 403-amino-acid polypeptide reads, in one-letter code: S-adenosylmethionine synthase (403 aa).

Histidine 17 contacts ATP. Aspartate 19 provides a ligand contact to Mg(2+). A K(+)-binding site is contributed by glutamate 45. L-methionine contacts are provided by glutamate 58 and glutamine 101. A flexible loop region spans residues 101–111; that stretch reads QSPDIAMGVDR. Residues 177–179, 244–245, aspartate 253, 259–260, alanine 276, and lysine 280 contribute to the ATP site; these read DGK, RF, and RK. Aspartate 253 serves as a coordination point for L-methionine. Lysine 284 is a binding site for L-methionine.

The protein belongs to the AdoMet synthase family. As to quaternary structure, homotetramer; dimer of dimers. It depends on Mg(2+) as a cofactor. Requires K(+) as cofactor.

It localises to the cytoplasm. It catalyses the reaction L-methionine + ATP + H2O = S-adenosyl-L-methionine + phosphate + diphosphate. The protein operates within amino-acid biosynthesis; S-adenosyl-L-methionine biosynthesis; S-adenosyl-L-methionine from L-methionine: step 1/1. In terms of biological role, catalyzes the formation of S-adenosylmethionine (AdoMet) from methionine and ATP. The overall synthetic reaction is composed of two sequential steps, AdoMet formation and the subsequent tripolyphosphate hydrolysis which occurs prior to release of AdoMet from the enzyme. In Geobacillus kaustophilus (strain HTA426), this protein is S-adenosylmethionine synthase.